The primary structure comprises 91 residues: Transcription factor ILI7 (91 aa).

Positions 4–58 (RSRSRASSAARITDEQIGDLVSKLQALLPEARLRSNDRVPSARVLQETCSYIRSL) constitute a bHLH domain.

This sequence belongs to the bHLH protein family.

Functionally, atypical and probable non DNA-binding bHLH transcription factor that integrates multiple signaling pathways to regulate cell elongation and plant development. This chain is Transcription factor ILI7 (ILI7), found in Oryza sativa subsp. indica (Rice).